We begin with the raw amino-acid sequence, 130 residues long: Classical arabinogalactan protein 7 (130 aa).

Residues 1-21 (MNSKIIEAFFIVALFTTSCLA) form the signal peptide. Gln22 is subject to Pyrrolidone carboxylic acid. Positions 22-108 (QAPAPSPTTT…DASAPPPNAA (87 aa)) are disordered. A 4-hydroxyproline mark is found at Pro24, Pro26, Pro28, Pro35, and Pro36. Pro24, Pro26, Pro28, Pro35, and Pro36 each carry an O-linked (Ara...) hydroxyproline glycan. The span at 33–68 (TPPPVATPPPAATPAPTTTPPPAVSPAPTSSPPSSA) shows a compositional bias: pro residues. Residue Asn106 is the site of GPI-anchor amidated asparagine attachment. The propeptide at 107-130 (AALTNKAFVVGSLVAAIIYAVVLA) is removed in mature form.

The protein belongs to the classical AGP family. In terms of processing, O-glycosylated on hydroxyprolines; noncontiguous hydroxylproline residues are glycosylated with arabinogalactan.

It localises to the cell membrane. In terms of biological role, proteoglycan that seems to be implicated in diverse developmental roles such as differentiation, cell-cell recognition, embryogenesis and programmed cell death. This chain is Classical arabinogalactan protein 7 (AGP7), found in Arabidopsis thaliana (Mouse-ear cress).